Consider the following 196-residue polypeptide: Peptide methionine sulfoxide reductase (196 aa).

Positions Met-1–Pro-14 are enriched in polar residues. Residues Met-1–Pro-23 are disordered.

This sequence belongs to the MsrA Met sulfoxide reductase family.

The catalysed reaction is L-methionyl-[protein] + [thioredoxin]-disulfide + H2O = L-methionyl-(S)-S-oxide-[protein] + [thioredoxin]-dithiol. It carries out the reaction [thioredoxin]-disulfide + L-methionine + H2O = L-methionine (S)-S-oxide + [thioredoxin]-dithiol. In terms of biological role, has an important function as a repair enzyme for proteins that have been inactivated by oxidation. Catalyzes the reversible oxidation-reduction of methionine sulfoxide in proteins to methionine. The polypeptide is Peptide methionine sulfoxide reductase (E4) (Solanum lycopersicum (Tomato)).